The following is a 126-amino-acid chain: Fluoride-specific ion channel FluC (126 aa).

The next 4 membrane-spanning stretches (helical) occupy residues 6–26, 32–52, 68–90, and 102–122; these read VLLV…VALA, TGFP…IGFI, LLLT…ETGG, and LYVA…TLLA. Na(+) is bound by residues Gly-76 and Thr-79.

The protein belongs to the fluoride channel Fluc/FEX (TC 1.A.43) family.

It localises to the cell inner membrane. It catalyses the reaction fluoride(in) = fluoride(out). Na(+) is not transported, but it plays an essential structural role and its presence is essential for fluoride channel function. Its function is as follows. Fluoride-specific ion channel. Important for reducing fluoride concentration in the cell, thus reducing its toxicity. The polypeptide is Fluoride-specific ion channel FluC (Chlorobaculum tepidum (strain ATCC 49652 / DSM 12025 / NBRC 103806 / TLS) (Chlorobium tepidum)).